The primary structure comprises 428 residues: Dihydroorotase (428 aa).

Residues histidine 59 and histidine 61 each contribute to the Zn(2+) site. Substrate contacts are provided by residues 61–63 (HLR) and asparagine 93. Positions 151, 178, and 231 each coordinate Zn(2+). Residue asparagine 277 participates in substrate binding. Aspartate 304 contributes to the Zn(2+) binding site. Aspartate 304 is a catalytic residue. Residues histidine 308 and 322 to 323 (FG) each bind substrate.

Belongs to the metallo-dependent hydrolases superfamily. DHOase family. Class I DHOase subfamily. It depends on Zn(2+) as a cofactor.

It catalyses the reaction (S)-dihydroorotate + H2O = N-carbamoyl-L-aspartate + H(+). Its pathway is pyrimidine metabolism; UMP biosynthesis via de novo pathway; (S)-dihydroorotate from bicarbonate: step 3/3. In terms of biological role, catalyzes the reversible cyclization of carbamoyl aspartate to dihydroorotate. The polypeptide is Dihydroorotase (Bacillus pumilus (strain SAFR-032)).